We begin with the raw amino-acid sequence, 147 residues long: Hemoglobin subunit beta (147 aa).

N-acetylvaline is present on valine 2. The Globin domain maps to 3–147; the sequence is NLSGDEKNAV…VANALAHRYH (145 aa). Serine 45 is modified (phosphoserine). Position 60 is an N6-acetyllysine (lysine 60). Histidine 64 lines the heme b pocket. Position 83 is an N6-acetyllysine (lysine 83). Heme b is bound at residue histidine 93. Cysteine 94 bears the S-nitrosocysteine mark.

The protein belongs to the globin family. In terms of assembly, heterotetramer of two alpha chains and two beta chains. In terms of tissue distribution, red blood cells.

In terms of biological role, involved in oxygen transport from the lung to the various peripheral tissues. The polypeptide is Hemoglobin subunit beta (HBB) (Vicugna pacos (Alpaca)).